Consider the following 461-residue polypeptide: Threonine/serine transporter ThrP (461 aa).

12 helical membrane passes run I17 to T37, W40 to M60, W97 to F117, A123 to V143, I156 to F176, G201 to I221, I244 to I264, I278 to G298, V333 to I353, F360 to I380, I401 to M421, and S430 to L450.

Belongs to the amino acid-polyamine-organocation (APC) superfamily.

Its subcellular location is the cell inner membrane. It catalyses the reaction L-threonine(in) + H(+)(in) = L-threonine(out) + H(+)(out). It carries out the reaction L-serine(in) + H(+)(in) = L-serine(out) + H(+)(out). Functionally, permease that mediates the proton-dependent threonine and serine uptake. The protein is Threonine/serine transporter ThrP of Salmonella typhi.